Here is a 197-residue protein sequence, read N- to C-terminus: Guanylate kinase (197 aa).

Residues 9 to 188 form the Guanylate kinase-like domain; sequence GRLVVFSAPS…AVEAVILAIS (180 aa). Position 16–23 (16–23) interacts with ATP; the sequence is APSGTGKS.

The protein belongs to the guanylate kinase family.

Its subcellular location is the cytoplasm. It carries out the reaction GMP + ATP = GDP + ADP. Functionally, essential for recycling GMP and indirectly, cGMP. This is Guanylate kinase from Chlorobium luteolum (strain DSM 273 / BCRC 81028 / 2530) (Pelodictyon luteolum).